Reading from the N-terminus, the 72-residue chain is MSKDKQQKKAVHTKSREALFDTADLIKHAKELFGVKPDILQGALFGVDQPRMTKSEANQLIQTFLTKEVMSS.

This is an uncharacterized protein from Bacillus subtilis (strain 168).